Here is a 350-residue protein sequence, read N- to C-terminus: Protein RecA (350 aa).

68-75 (GPESSGKT) contributes to the ATP binding site.

The protein belongs to the RecA family.

It is found in the cytoplasm. Its function is as follows. Can catalyze the hydrolysis of ATP in the presence of single-stranded DNA, the ATP-dependent uptake of single-stranded DNA by duplex DNA, and the ATP-dependent hybridization of homologous single-stranded DNAs. It interacts with LexA causing its activation and leading to its autocatalytic cleavage. The sequence is that of Protein RecA from Mycolicibacterium gilvum (strain PYR-GCK) (Mycobacterium gilvum (strain PYR-GCK)).